A 66-amino-acid chain; its full sequence is Xenoxin-3 (66 aa).

4 disulfide bridges follow: Cys-3–Cys-24, Cys-17–Cys-37, Cys-43–Cys-58, and Cys-59–Cys-64.

Expressed by the skin dorsal glands.

The protein localises to the secreted. Functionally, lacks alpha-neurotoxic activity, has apparently no antibacterial activity, nor anti-coagulant potency. The polypeptide is Xenoxin-3 (Xenopus laevis (African clawed frog)).